A 98-amino-acid polypeptide reads, in one-letter code: NADH-ubiquinone oxidoreductase chain 4L (98 aa).

Helical transmembrane passes span 1–21 (MMSI…GVLI), 28–48 (STLL…ALLI), and 59–79 (APLI…ALLV).

It belongs to the complex I subunit 4L family. As to quaternary structure, core subunit of respiratory chain NADH dehydrogenase (Complex I) which is composed of 45 different subunits.

Its subcellular location is the mitochondrion inner membrane. The catalysed reaction is a ubiquinone + NADH + 5 H(+)(in) = a ubiquinol + NAD(+) + 4 H(+)(out). Its function is as follows. Core subunit of the mitochondrial membrane respiratory chain NADH dehydrogenase (Complex I) which catalyzes electron transfer from NADH through the respiratory chain, using ubiquinone as an electron acceptor. Part of the enzyme membrane arm which is embedded in the lipid bilayer and involved in proton translocation. The sequence is that of NADH-ubiquinone oxidoreductase chain 4L (MT-ND4L) from Lagorchestes hirsutus (Rufous hare-wallaby).